A 358-amino-acid polypeptide reads, in one-letter code: Alanine racemase (358 aa).

The active-site Proton acceptor; specific for D-alanine is Lys35. Position 35 is an N6-(pyridoxal phosphate)lysine (Lys35). Arg130 lines the substrate pocket. Catalysis depends on Tyr255, which acts as the Proton acceptor; specific for L-alanine. Substrate is bound at residue Met303.

Belongs to the alanine racemase family. Requires pyridoxal 5'-phosphate as cofactor.

It carries out the reaction L-alanine = D-alanine. Its pathway is amino-acid biosynthesis; D-alanine biosynthesis; D-alanine from L-alanine: step 1/1. Catalyzes the interconversion of L-alanine and D-alanine. May also act on other amino acids. In Shewanella baltica (strain OS185), this protein is Alanine racemase (alr).